The chain runs to 421 residues: Serine--tRNA ligase (421 aa).

Thr-230–Glu-232 contacts L-serine. Arg-259–Glu-261 contacts ATP. Glu-282 contributes to the L-serine binding site. Residue Glu-346–Ser-349 coordinates ATP. Ser-381 is an L-serine binding site.

It belongs to the class-II aminoacyl-tRNA synthetase family. Type-1 seryl-tRNA synthetase subfamily. Homodimer. The tRNA molecule binds across the dimer.

The protein resides in the cytoplasm. It catalyses the reaction tRNA(Ser) + L-serine + ATP = L-seryl-tRNA(Ser) + AMP + diphosphate + H(+). The catalysed reaction is tRNA(Sec) + L-serine + ATP = L-seryl-tRNA(Sec) + AMP + diphosphate + H(+). The protein operates within aminoacyl-tRNA biosynthesis; selenocysteinyl-tRNA(Sec) biosynthesis; L-seryl-tRNA(Sec) from L-serine and tRNA(Sec): step 1/1. Its function is as follows. Catalyzes the attachment of serine to tRNA(Ser). Is also able to aminoacylate tRNA(Sec) with serine, to form the misacylated tRNA L-seryl-tRNA(Sec), which will be further converted into selenocysteinyl-tRNA(Sec). This chain is Serine--tRNA ligase, found in Acidithiobacillus ferrooxidans (strain ATCC 23270 / DSM 14882 / CIP 104768 / NCIMB 8455) (Ferrobacillus ferrooxidans (strain ATCC 23270)).